The following is a 335-amino-acid chain: Heat-inducible transcription repressor HrcA (335 aa).

Belongs to the HrcA family.

Its function is as follows. Negative regulator of class I heat shock genes (grpE-dnaK-dnaJ and groELS operons). Prevents heat-shock induction of these operons. The polypeptide is Heat-inducible transcription repressor HrcA (Mesomycoplasma hyopneumoniae (strain 232) (Mycoplasma hyopneumoniae)).